Here is a 502-residue protein sequence, read N- to C-terminus: Mannitol 2-dehydrogenase (502 aa).

37–48 (IVHIGVGGFHRA) provides a ligand contact to NAD(+).

The protein belongs to the mannitol dehydrogenase family. Monomer.

It catalyses the reaction D-mannitol + NAD(+) = D-fructose + NADH + H(+). In terms of biological role, catalyzes the NAD(H)-dependent interconversion of D-fructose and D-mannitol in the mannitol metabolic pathway. This chain is Mannitol 2-dehydrogenase, found in Aspergillus fumigatus (strain CBS 144.89 / FGSC A1163 / CEA10) (Neosartorya fumigata).